The primary structure comprises 254 residues: Imidazole glycerol phosphate synthase subunit HisF (254 aa).

Residues D12 and D131 contribute to the active site.

The protein belongs to the HisA/HisF family. Heterodimer of HisH and HisF.

The protein localises to the cytoplasm. It carries out the reaction 5-[(5-phospho-1-deoxy-D-ribulos-1-ylimino)methylamino]-1-(5-phospho-beta-D-ribosyl)imidazole-4-carboxamide + L-glutamine = D-erythro-1-(imidazol-4-yl)glycerol 3-phosphate + 5-amino-1-(5-phospho-beta-D-ribosyl)imidazole-4-carboxamide + L-glutamate + H(+). Its pathway is amino-acid biosynthesis; L-histidine biosynthesis; L-histidine from 5-phospho-alpha-D-ribose 1-diphosphate: step 5/9. IGPS catalyzes the conversion of PRFAR and glutamine to IGP, AICAR and glutamate. The HisF subunit catalyzes the cyclization activity that produces IGP and AICAR from PRFAR using the ammonia provided by the HisH subunit. This Herminiimonas arsenicoxydans protein is Imidazole glycerol phosphate synthase subunit HisF.